The following is a 239-amino-acid chain: tRNA (guanine-N(1)-)-methyltransferase (239 aa).

S-adenosyl-L-methionine is bound by residues Gly-108 and 127-132 (LGDFVL).

It belongs to the RNA methyltransferase TrmD family. In terms of assembly, homodimer.

The protein localises to the cytoplasm. The enzyme catalyses guanosine(37) in tRNA + S-adenosyl-L-methionine = N(1)-methylguanosine(37) in tRNA + S-adenosyl-L-homocysteine + H(+). Functionally, specifically methylates guanosine-37 in various tRNAs. This chain is tRNA (guanine-N(1)-)-methyltransferase, found in Streptococcus pyogenes serotype M6 (strain ATCC BAA-946 / MGAS10394).